A 162-amino-acid chain; its full sequence is Xanthine phosphoribosyltransferase (162 aa).

Leucine 5 and threonine 12 together coordinate xanthine. A 5-phospho-alpha-D-ribose 1-diphosphate-binding site is contributed by 113-117 (ANGQA). Lysine 141 lines the xanthine pocket.

Belongs to the purine/pyrimidine phosphoribosyltransferase family. Xpt subfamily. Homodimer.

The protein resides in the cytoplasm. It catalyses the reaction XMP + diphosphate = xanthine + 5-phospho-alpha-D-ribose 1-diphosphate. The protein operates within purine metabolism; XMP biosynthesis via salvage pathway; XMP from xanthine: step 1/1. Functionally, converts the preformed base xanthine, a product of nucleic acid breakdown, to xanthosine 5'-monophosphate (XMP), so it can be reused for RNA or DNA synthesis. In Streptococcus mitis, this protein is Xanthine phosphoribosyltransferase (xpt).